We begin with the raw amino-acid sequence, 219 residues long: Cytidylate kinase (219 aa).

ATP is bound at residue 15-23; sequence GPAASGKGT.

It belongs to the cytidylate kinase family. Type 1 subfamily.

The protein resides in the cytoplasm. It catalyses the reaction CMP + ATP = CDP + ADP. It carries out the reaction dCMP + ATP = dCDP + ADP. This chain is Cytidylate kinase, found in Brucella suis biovar 1 (strain 1330).